The chain runs to 110 residues: MVHIIPKTQRDIMLLIRSHVIMQKSFILHLTFLWSLYTLMTIQGTFIYIPVFAGANVKENICDLHCRWQCGTRLMVKYTFHHRHRWPESKAPMNTFKEQISTIMHLVTDC.

This is Probable protein L3 from Human papillomavirus type 5b.